A 99-amino-acid polypeptide reads, in one-letter code: Putative membrane protein insertion efficiency factor (99 aa).

Belongs to the UPF0161 family.

It localises to the cell membrane. Functionally, could be involved in insertion of integral membrane proteins into the membrane. This chain is Putative membrane protein insertion efficiency factor, found in Corynebacterium efficiens (strain DSM 44549 / YS-314 / AJ 12310 / JCM 11189 / NBRC 100395).